The chain runs to 298 residues: MAGQLREYRRRIKTVQSTKKITKAMELIAASRIAKARARVAASRPYAEEITRVISAVASQTTIAHPLTTERPEPTRAAVVVITSDRGLAGGYSSNALKRAGELVELLREEGKEPLLYAVGRKAGTYYRFRGRPLAGDYTGFSEQPSYSDAKAVADALITAFTTPTEEGGVDEIHLVFTEYVSAMTQNAVAHRLLPMVLREHDEPPAGGPLPNYEFEPSAEAVLDALLPRYVESRLYAALLESAASESAARQRAMKSATDNAEDLIKTYTRAANRARQDAITQEISEIVGGANALASGA.

This sequence belongs to the ATPase gamma chain family. F-type ATPases have 2 components, CF(1) - the catalytic core - and CF(0) - the membrane proton channel. CF(1) has five subunits: alpha(3), beta(3), gamma(1), delta(1), epsilon(1). CF(0) has three main subunits: a, b and c.

Its subcellular location is the cell membrane. In terms of biological role, produces ATP from ADP in the presence of a proton gradient across the membrane. The gamma chain is believed to be important in regulating ATPase activity and the flow of protons through the CF(0) complex. This is ATP synthase gamma chain from Parafrankia sp. (strain EAN1pec).